Reading from the N-terminus, the 434-residue chain is Elongation factor 1-alpha (434 aa).

The tr-type G domain maps to Lys-5 to Val-232. Residues Gly-14–Ser-21 form a G1 region. Gly-14–Ser-21 serves as a coordination point for GTP. Residues Gly-70–Asp-74 form a G2 region. The segment at Asp-91 to Gly-94 is G3. GTP is bound by residues Asp-91 to His-95 and Asn-153 to Asp-156. Residues Asn-153–Asp-156 form a G4 region. The G5 stretch occupies residues Ser-196–Phe-198.

This sequence belongs to the TRAFAC class translation factor GTPase superfamily. Classic translation factor GTPase family. EF-Tu/EF-1A subfamily.

The protein resides in the cytoplasm. Its function is as follows. This protein promotes the GTP-dependent binding of aminoacyl-tRNA to the A-site of ribosomes during protein biosynthesis. The protein is Elongation factor 1-alpha of Blastocystis hominis.